The sequence spans 262 residues: Small ribosomal subunit protein eS1y (262 aa).

Residues 1–18 (MAVGKNKRISKGRKGGKK) are compositionally biased toward basic residues. Residues 1–21 (MAVGKNKRISKGRKGGKKKAV) are disordered.

The protein belongs to the eukaryotic ribosomal protein eS1 family. Component of the small ribosomal subunit. Mature ribosomes consist of a small (40S) and a large (60S) subunit. The 40S subunit contains about 33 different proteins and 1 molecule of RNA (18S). The 60S subunit contains about 49 different proteins and 3 molecules of RNA (25S, 5.8S and 5S).

The protein localises to the cytoplasm. The sequence is that of Small ribosomal subunit protein eS1y from Arabidopsis thaliana (Mouse-ear cress).